The sequence spans 128 residues: Large ribosomal subunit protein bL20c (128 aa).

Belongs to the bacterial ribosomal protein bL20 family.

The protein localises to the plastid. In terms of biological role, binds directly to 23S ribosomal RNA and is necessary for the in vitro assembly process of the 50S ribosomal subunit. It is not involved in the protein synthesizing functions of that subunit. The chain is Large ribosomal subunit protein bL20c (rpl20) from Lathraea clandestina (Purple toothwort).